The chain runs to 197 residues: Imidazoleglycerol-phosphate dehydratase (197 aa).

The protein belongs to the imidazoleglycerol-phosphate dehydratase family.

The protein localises to the cytoplasm. The enzyme catalyses D-erythro-1-(imidazol-4-yl)glycerol 3-phosphate = 3-(imidazol-4-yl)-2-oxopropyl phosphate + H2O. The protein operates within amino-acid biosynthesis; L-histidine biosynthesis; L-histidine from 5-phospho-alpha-D-ribose 1-diphosphate: step 6/9. The chain is Imidazoleglycerol-phosphate dehydratase from Pseudomonas putida (strain ATCC 700007 / DSM 6899 / JCM 31910 / BCRC 17059 / LMG 24140 / F1).